The sequence spans 1150 residues: Pyruvate carboxylase (1150 aa).

A Biotin carboxylation domain is found at 3-455 (QIKKLLVANR…TTKFIEETPE (453 aa)). ATP contacts are provided by K119, K161, H211, and E278. One can recognise an ATP-grasp domain in the interval 123–319 (RTTAIKADLP…IVKTQILVAA (197 aa)). Residue R294 is part of the active site. The Pyruvate carboxyltransferase domain maps to 533 to 802 (VLLTDTTFRD…HLRTDIEGME (270 aa)). 541-545 (RDAHQ) is a binding site for substrate. Mn(2+)-binding residues include D542, K712, H741, and H743. K712 carries the post-translational modification N6-carboxylysine. In terms of domain architecture, Biotinyl-binding spans 1071–1146 (KADKSNPSHI…ATGDLLIEIE (76 aa)). Residue K1112 is modified to N6-biotinyllysine.

As to quaternary structure, homotetramer. Biotin serves as cofactor.

It carries out the reaction hydrogencarbonate + pyruvate + ATP = oxaloacetate + ADP + phosphate + H(+). Functionally, catalyzes a 2-step reaction, involving the ATP-dependent carboxylation of the covalently attached biotin in the first step and the transfer of the carboxyl group to pyruvate in the second. In Staphylococcus aureus (strain Mu50 / ATCC 700699), this protein is Pyruvate carboxylase (pycA).